A 309-amino-acid polypeptide reads, in one-letter code: Probable lipid kinase YegS-like (309 aa).

The DAGKc domain maps to 1–134 (MAPSHWRVIL…VDLLRIDADH (134 aa)). Residues Thr39, 65 to 71 (GDGTLSE), and Thr96 contribute to the ATP site. Leu219, Asp222, and Leu224 together coordinate Mg(2+). Residue Glu280 is the Proton acceptor of the active site.

This sequence belongs to the diacylglycerol/lipid kinase family. YegS lipid kinase subfamily. It depends on Mg(2+) as a cofactor. Ca(2+) is required as a cofactor.

Its subcellular location is the cytoplasm. Its function is as follows. Probably phosphorylates lipids; the in vivo substrate is unknown. The chain is Probable lipid kinase YegS-like from Xanthomonas euvesicatoria pv. vesicatoria (strain 85-10) (Xanthomonas campestris pv. vesicatoria).